Here is a 513-residue protein sequence, read N- to C-terminus: Bifunctional purine biosynthesis protein PurH (513 aa).

The MGS-like domain occupies 1-144 (MSKRALISVS…KNHERVGIVV (144 aa)).

This sequence belongs to the PurH family.

It catalyses the reaction (6R)-10-formyltetrahydrofolate + 5-amino-1-(5-phospho-beta-D-ribosyl)imidazole-4-carboxamide = 5-formamido-1-(5-phospho-D-ribosyl)imidazole-4-carboxamide + (6S)-5,6,7,8-tetrahydrofolate. It carries out the reaction IMP + H2O = 5-formamido-1-(5-phospho-D-ribosyl)imidazole-4-carboxamide. The protein operates within purine metabolism; IMP biosynthesis via de novo pathway; 5-formamido-1-(5-phospho-D-ribosyl)imidazole-4-carboxamide from 5-amino-1-(5-phospho-D-ribosyl)imidazole-4-carboxamide (10-formyl THF route): step 1/1. It functions in the pathway purine metabolism; IMP biosynthesis via de novo pathway; IMP from 5-formamido-1-(5-phospho-D-ribosyl)imidazole-4-carboxamide: step 1/1. This is Bifunctional purine biosynthesis protein PurH from Moorella thermoacetica (strain ATCC 39073 / JCM 9320).